We begin with the raw amino-acid sequence, 291 residues long: Aspartate carbamoyltransferase catalytic subunit (291 aa).

The carbamoyl phosphate site is built by Arg49 and Thr50. L-aspartate is bound at residue Lys77. Carbamoyl phosphate contacts are provided by Arg99, His127, and Gln130. L-aspartate-binding residues include Arg160 and Arg210. Residues Gly249 and Pro250 each coordinate carbamoyl phosphate.

It belongs to the aspartate/ornithine carbamoyltransferase superfamily. ATCase family. Heterododecamer (2C3:3R2) of six catalytic PyrB chains organized as two trimers (C3), and six regulatory PyrI chains organized as three dimers (R2).

It catalyses the reaction carbamoyl phosphate + L-aspartate = N-carbamoyl-L-aspartate + phosphate + H(+). Its pathway is pyrimidine metabolism; UMP biosynthesis via de novo pathway; (S)-dihydroorotate from bicarbonate: step 2/3. Its function is as follows. Catalyzes the condensation of carbamoyl phosphate and aspartate to form carbamoyl aspartate and inorganic phosphate, the committed step in the de novo pyrimidine nucleotide biosynthesis pathway. In Sulfurimonas denitrificans (strain ATCC 33889 / DSM 1251) (Thiomicrospira denitrificans (strain ATCC 33889 / DSM 1251)), this protein is Aspartate carbamoyltransferase catalytic subunit.